Here is a 191-residue protein sequence, read N- to C-terminus: Adenine phosphoribosyltransferase (191 aa).

The protein belongs to the purine/pyrimidine phosphoribosyltransferase family. Homodimer.

The protein resides in the cytoplasm. It carries out the reaction AMP + diphosphate = 5-phospho-alpha-D-ribose 1-diphosphate + adenine. Its pathway is purine metabolism; AMP biosynthesis via salvage pathway; AMP from adenine: step 1/1. Its function is as follows. Catalyzes a salvage reaction resulting in the formation of AMP, that is energically less costly than de novo synthesis. The polypeptide is Adenine phosphoribosyltransferase (Nocardia farcinica (strain IFM 10152)).